A 2170-amino-acid polypeptide reads, in one-letter code: Supervillin (2170 aa).

Positions 1-167 are interaction with MYLK; the sequence is MKRKERIARR…NSRHSRTESG (167 aa). Disordered regions lie at residues 37 to 94, 107 to 327, 413 to 444, 511 to 546, and 567 to 643; these read EDTP…HSLE, RRRQ…QSES, PEPL…NKDL, DYTG…GAEA, and RASK…EDEE. The residue at position 50 (Ser-50) is a Phosphoserine. Composition is skewed to polar residues over residues 63-73 and 81-90; these read PGSSLEKQTPS and GIHSSGSMDT. Residues 134-166 show a composition bias toward basic and acidic residues; that stretch reads SRKDPDVTERRGKSDKQEEQSKDANSRHSRTES. Residues 167-195 are compositionally biased toward polar residues; sequence GPRTSLVASQDCTPLGSNMSDQEQLLNVE. Residues Ser-220, Ser-227, and Ser-241 each carry the phosphoserine modification. Polar residues predominate over residues 230–241; that stretch reads QIPSSPLQQPAS. Basic and acidic residues-rich tracts occupy residues 261-272 and 286-297; these read PTHEWFLQRDSE and KVREKLVKEESA. Residues 298–313 are compositionally biased toward polar residues; the sequence is RSSPELTSESLTQRRQ. Ser-299 and Ser-300 each carry phosphoserine. Residues 427 to 444 are compositionally biased toward basic and acidic residues; that stretch reads EDDRLVRGHKDPSGNKDL. Composition is skewed to basic and acidic residues over residues 570–582 and 606–615; these read KKPE…ERSA and ESRKTSERFR. Residues Ser-632, Ser-666, Ser-728, and Ser-761 each carry the phosphoserine modification. A disordered region spans residues 743 to 771; the sequence is ASAHQKALARDQANEGRESAEPGEPDSST. The span at 750–762 shows a compositional bias: basic and acidic residues; sequence LARDQANEGRESA. At Tyr-809 the chain carries Phosphotyrosine. Thr-811 carries the phosphothreonine modification. Phosphoserine occurs at positions 857, 877, and 881. The interval 887–909 is disordered; it reads AWRPLVEHSGSKGMPGESGKTES. A phosphoserine mark is found at Ser-960, Ser-1011, Ser-1031, and Ser-1077. The disordered stretch occupies residues 1117–1137; that stretch reads HTQEVEQSLKKKRVTESRESQ. Residues 1119-1137 show a composition bias toward basic and acidic residues; sequence QEVEQSLKKKRVTESRESQ. Position 1159 is an omega-N-methylarginine (Arg-1159). Ser-1181 and Ser-1184 each carry phosphoserine. Thr-1186 carries the phosphothreonine modification. Ser-1190, Ser-1278, and Ser-1361 each carry phosphoserine. The segment at 1375-1643 is interaction with NEB; it reads SNINLRSVNL…KFLDWTELKR (269 aa). Gelsolin-like repeat units follow at residues 1397 to 1496, 1516 to 1638, 1708 to 1818, 1837 to 1938, and 1971 to 2078; these read KKLM…LGGQ, IETN…FLDW, VSVD…FQGG, WRLY…LGRR, and ATEF…FPSW. An HP domain is found at 2107-2170; it reads KLCKTIYPLA…VNLKKSKGLF (64 aa).

The protein belongs to the villin/gelsolin family. As to quaternary structure, associates with F-actin. Interacts with NEB. Interacts with MYH9. Interacts with MYLK. Interacts with TASOR. In terms of assembly, interacts with TRIP6. Interacts with DYNLT1. Interacts with KIF14; at midbody during cytokinesis. In terms of tissue distribution, expressed in the heart, tongue and granular cells within the cerebellum.

Its subcellular location is the cell membrane. It is found in the cytoplasm. It localises to the cytoskeleton. The protein localises to the cell projection. The protein resides in the invadopodium. Its subcellular location is the podosome. It is found in the midbody. It localises to the cleavage furrow. Forms a high-affinity link between the actin cytoskeleton and the membrane. Is among the first costameric proteins to assemble during myogenesis and it contributes to myogenic membrane structure and differentiation. Appears to be involved in myosin II assembly. May modulate myosin II regulation through MLCK during cell spreading, an initial step in cell migration. May play a role in invadopodial function. In terms of biological role, may be involved in modulation of focal adhesions. Supervillin-mediated down-regulation of focal adhesions involves binding to TRIP6. Plays a role in cytokinesis through KIF14 interaction. This is Supervillin (Svil) from Mus musculus (Mouse).